Reading from the N-terminus, the 179-residue chain is Ribosome maturation factor RimP (179 aa).

The protein belongs to the RimP family.

It localises to the cytoplasm. Its function is as follows. Required for maturation of 30S ribosomal subunits. This chain is Ribosome maturation factor RimP, found in Prosthecochloris aestuarii (strain DSM 271 / SK 413).